A 106-amino-acid chain; its full sequence is uncharacterized protein (106 aa).

Disordered regions lie at residues phenylalanine 33 to aspartate 64 and asparagine 87 to lysine 106. Over residues aspartate 52 to asparagine 63 the composition is skewed to basic and acidic residues. Polar residues predominate over residues asparagine 87–proline 99.

The protein localises to the mitochondrion. This is an uncharacterized protein from Arabidopsis thaliana (Mouse-ear cress).